The sequence spans 216 residues: Elongation factor Ts (216 aa).

Positions 81–84 (TDFV) are involved in Mg(2+) ion dislocation from EF-Tu.

This sequence belongs to the EF-Ts family.

It localises to the cytoplasm. In terms of biological role, associates with the EF-Tu.GDP complex and induces the exchange of GDP to GTP. It remains bound to the aminoacyl-tRNA.EF-Tu.GTP complex up to the GTP hydrolysis stage on the ribosome. This is Elongation factor Ts from Geobacter metallireducens (strain ATCC 53774 / DSM 7210 / GS-15).